Reading from the N-terminus, the 261-residue chain is LIM and SH3 domain protein 1 (261 aa).

M1 is modified (N-acetylmethionine). An LIM zinc-binding domain is found at 5-56 (CARCGKIVYPTEKVNCLDKFWHKACFHCETCKMTLNMKNYKGYEKKPYCNAH). K42 carries the N6-acetyllysine modification. Nebulin repeat units follow at residues 61 to 95 (SFTMVADTPENLRLKQQSELQSQVRYKEEFEKNKG) and 97 to 131 (GFSVVADTPELQRIKKTQDQISNIKYHEEFEKSRM). T68 is subject to Phosphothreonine. K75 is subject to N6-methyllysine. Phosphoserine is present on S99. T104 carries the post-translational modification Phosphothreonine. The interval 111 to 186 (KKTQDQISNI…QPVAQSYGGY (76 aa)) is disordered. Position 112 is an N6-succinyllysine (K112). Residue S118 is modified to Phosphoserine. The span at 121-130 (KYHEEFEKSR) shows a compositional bias: basic and acidic residues. Phosphoserine is present on residues S134 and S146. The segment covering 167–183 (SAPVYQQPQQQPVAQSY) has biased composition (low complexity). An SH3 domain is found at 202 to 261 (GGGKRYRAVYDYSAADEDEVSFQDGDTIVNVQQIDDGWMYGTVERTGDTGMLPANYVEAI).

As to quaternary structure, interacts with F-actin. Interacts with ANKRD54. Interacts with KBTBD10.

The protein localises to the cytoplasm. It localises to the cell cortex. The protein resides in the cytoskeleton. Plays an important role in the regulation of dynamic actin-based, cytoskeletal activities. Agonist-dependent changes in LASP1 phosphorylation may also serve to regulate actin-associated ion transport activities, not only in the parietal cell but also in certain other F-actin-rich secretory epithelial cell types. The sequence is that of LIM and SH3 domain protein 1 (LASP1) from Homo sapiens (Human).